The following is a 121-amino-acid chain: Large ribosomal subunit protein bL20 (121 aa).

The protein belongs to the bacterial ribosomal protein bL20 family.

Its function is as follows. Binds directly to 23S ribosomal RNA and is necessary for the in vitro assembly process of the 50S ribosomal subunit. It is not involved in the protein synthesizing functions of that subunit. The sequence is that of Large ribosomal subunit protein bL20 from Ruegeria pomeroyi (strain ATCC 700808 / DSM 15171 / DSS-3) (Silicibacter pomeroyi).